Here is a 268-residue protein sequence, read N- to C-terminus: Chymotrypsin-C (268 aa).

The first 16 residues, 1–16 (MLGITVFTTFLAYASS), serve as a signal peptide directing secretion. The propeptide at 17–29 (CGAPIFQPNLSAR) is activation peptide. 5 disulfides stabilise this stretch: Cys-17–Cys-141, Cys-59–Cys-75, Cys-155–Cys-222, Cys-186–Cys-202, and Cys-212–Cys-243. An N-linked (GlcNAc...) asparagine glycan is attached at Asn-25. One can recognise a Peptidase S1 domain in the interval 30-268 (VVGGEDAIPH…IDWINQKLQL (239 aa)). Residues His-74 and Asp-121 each act as charge relay system in the active site. The Charge relay system role is filled by Ser-216.

This sequence belongs to the peptidase S1 family. Elastase subfamily. As to quaternary structure, monomer. The zymogen is secreted as a ternary complex composed of procarboxypeptidase A, chymotrypsinogen C and proproteinase E. Pancreas.

It is found in the secreted. It localises to the extracellular space. It carries out the reaction Preferential cleavage: Leu-|-Xaa, Tyr-|-Xaa, Phe-|-Xaa, Met-|-Xaa, Trp-|-Xaa, Gln-|-Xaa, Asn-|-Xaa.. Its function is as follows. Regulates activation and degradation of trypsinogens and procarboxypeptidases by targeting specific cleavage sites within their zymogen precursors. Has chymotrypsin-type protease activity and hypocalcemic activity. The polypeptide is Chymotrypsin-C (CTRC) (Bos taurus (Bovine)).